The primary structure comprises 311 residues: 1D-myo-inositol 2-acetamido-2-deoxy-alpha-D-glucopyranoside deacetylase (311 aa).

Zn(2+) is bound by residues H29, D32, and H162.

The protein belongs to the MshB deacetylase family. Zn(2+) serves as cofactor.

It catalyses the reaction 1D-myo-inositol 2-acetamido-2-deoxy-alpha-D-glucopyranoside + H2O = 1D-myo-inositol 2-amino-2-deoxy-alpha-D-glucopyranoside + acetate. Catalyzes the deacetylation of 1D-myo-inositol 2-acetamido-2-deoxy-alpha-D-glucopyranoside (GlcNAc-Ins) in the mycothiol biosynthesis pathway. This chain is 1D-myo-inositol 2-acetamido-2-deoxy-alpha-D-glucopyranoside deacetylase, found in Corynebacterium efficiens (strain DSM 44549 / YS-314 / AJ 12310 / JCM 11189 / NBRC 100395).